A 123-amino-acid chain; its full sequence is Small ribosomal subunit protein uS13 (123 aa).

The tract at residues 103–123 (TRTNARTRKGPKKTVGVRRKK) is disordered. Positions 105–123 (TNARTRKGPKKTVGVRRKK) are enriched in basic residues.

The protein belongs to the universal ribosomal protein uS13 family. In terms of assembly, part of the 30S ribosomal subunit. Forms a loose heterodimer with protein S19. Forms two bridges to the 50S subunit in the 70S ribosome.

Its function is as follows. Located at the top of the head of the 30S subunit, it contacts several helices of the 16S rRNA. In the 70S ribosome it contacts the 23S rRNA (bridge B1a) and protein L5 of the 50S subunit (bridge B1b), connecting the 2 subunits; these bridges are implicated in subunit movement. Contacts the tRNAs in the A and P-sites. This is Small ribosomal subunit protein uS13 from Desulforudis audaxviator (strain MP104C).